Reading from the N-terminus, the 510-residue chain is MDFELKTLTRTLICNEKADALIVLIPEGLTAGDDALSVLAALAIKSGDLEVKPGKLLNAYRVTGIAATRVLLVGAGDASPKSVRTAVNAAMGALKAGNNVQRAVLCLNALPTLQPEAVRAAIVACSETAYAYTTTKSKPAAAKLQQMVVAVDGLANAQAGFDKAVGLAKGIELAKEWANRPANHATPTLLAGAAKELGKLPRIKTEVLGPKEIEKLGMGAFLAVAQGTAEPLRFIVLRYEGAAKAEAPVVLIGKGITFDTGGISIKPAAEMDEMKFDMCGAASVLGTFRALAELQPGLNVVGLIPACENMPGDRAIKPGDVVTSMSGQTIEILNTDAEGRLVLCDALTYAARLKPRAVVDIATLTGACVVALGGVRSGLFSNNEALAESLARAGESSLDPCWRMPLDDDYAEGLKSNFADVANVAGRAGGAVTAAKFLQRFAADFAWAHLDIAGTAWKSGAAKGATGRPVALLLDFLLGQVQAVPAAQPVKASPKTRPARKSTPAAKTRA.

2 residues coordinate Mn(2+): Lys254 and Asp259. The active site involves Lys266. 3 residues coordinate Mn(2+): Asp277, Asp336, and Glu338. The active site involves Arg340. The disordered stretch occupies residues 487–510 (AQPVKASPKTRPARKSTPAAKTRA).

This sequence belongs to the peptidase M17 family. Mn(2+) serves as cofactor.

It localises to the cytoplasm. The enzyme catalyses Release of an N-terminal amino acid, Xaa-|-Yaa-, in which Xaa is preferably Leu, but may be other amino acids including Pro although not Arg or Lys, and Yaa may be Pro. Amino acid amides and methyl esters are also readily hydrolyzed, but rates on arylamides are exceedingly low.. It carries out the reaction Release of an N-terminal amino acid, preferentially leucine, but not glutamic or aspartic acids.. Presumably involved in the processing and regular turnover of intracellular proteins. Catalyzes the removal of unsubstituted N-terminal amino acids from various peptides. The sequence is that of Probable cytosol aminopeptidase from Polaromonas naphthalenivorans (strain CJ2).